The primary structure comprises 314 residues: Aryldialkylphosphatase (314 aa).

3 residues coordinate Fe cation: histidine 22, histidine 24, and lysine 137. The Co(2+) site is built by lysine 137, histidine 170, and histidine 199. Lysine 137 carries the post-translational modification N6-carboxylysine. Aspartate 256 lines the Fe cation pocket.

This sequence belongs to the metallo-dependent hydrolases superfamily. Phosphotriesterase family. Homodimer. The cofactor is Co(2+). Fe cation serves as cofactor.

It carries out the reaction An aryl dialkyl phosphate + H2O = dialkyl phosphate + an aryl alcohol.. With respect to regulation, inactivated by EDTA and o-phenanthroline. Has a low paraoxonase activity. Also active, but with a lower activity, against other organo-phosphorus insecticides such as Dursban, Coumaphos, pNP-butanoate or parathion. The sequence is that of Aryldialkylphosphatase (php) from Saccharolobus solfataricus (strain ATCC 35092 / DSM 1617 / JCM 11322 / P2) (Sulfolobus solfataricus).